A 1480-amino-acid polypeptide reads, in one-letter code: ABC transporter G family member 49 (1480 aa).

Positions 1-18 (MHTTTQATPQKSMVMTTT) are enriched in polar residues. Disordered stretches follow at residues 1–42 (MHTT…AGSS), 60–81 (VSGE…EDDE), and 104–124 (SSTR…GGAA). Gly residues-rich tracts occupy residues 63–73 (ELGGGGGGGGG) and 107–123 (RGGG…GGGA). The ABC transporter 1 domain occupies 212–485 (LAAKLGFSHH…FESCGFKCPE (274 aa)). ATP is bound at residue 245 to 252 (GPPGCGKT). Residues 563–775 (HLLKACFDRE…AEIGLTGNEF (213 aa)) enclose the ABC transmembrane type-2 1 domain. 6 helical membrane passes run 581-601 (FLHI…GTVF), 619-639 (SLFY…VMSI), 656-676 (GWAY…VAAL), 699-719 (LLVL…VGSY), 725-745 (VGPI…GFLI), and 811-831 (VAAL…GLTI). Residues 877 to 1129 (ISFQDVNYYV…KVIQYFQSIP (253 aa)) enclose the ABC transporter 2 domain. Position 922–929 (922–929 (GVTGAGKT)) interacts with ATP. The ABC transmembrane type-2 2 domain maps to 1202–1418 (EQFKACLWKQ…TLNLLFTTQF (217 aa)). Transmembrane regions (helical) follow at residues 1226–1246 (IVFM…QGNI), 1254–1274 (GLFT…INNS), 1311–1331 (IPYV…TIGY), 1340–1360 (WFFY…MLIV), 1368–1388 (VASI…GFVM), 1396–1416 (WWIW…LFTT), and 1449–1469 (LLPL…ILYG).

It belongs to the ABC transporter superfamily. ABCG family. PDR (TC 3.A.1.205) subfamily.

The protein localises to the membrane. Its function is as follows. May be a general defense protein. This Oryza sativa subsp. japonica (Rice) protein is ABC transporter G family member 49.